Here is a 284-residue protein sequence, read N- to C-terminus: Bifunctional protein FolD (284 aa).

Residues 166–168 and Ile232 each bind NADP(+); that span reads GAS.

Belongs to the tetrahydrofolate dehydrogenase/cyclohydrolase family. As to quaternary structure, homodimer.

It catalyses the reaction (6R)-5,10-methylene-5,6,7,8-tetrahydrofolate + NADP(+) = (6R)-5,10-methenyltetrahydrofolate + NADPH. The enzyme catalyses (6R)-5,10-methenyltetrahydrofolate + H2O = (6R)-10-formyltetrahydrofolate + H(+). It functions in the pathway one-carbon metabolism; tetrahydrofolate interconversion. Catalyzes the oxidation of 5,10-methylenetetrahydrofolate to 5,10-methenyltetrahydrofolate and then the hydrolysis of 5,10-methenyltetrahydrofolate to 10-formyltetrahydrofolate. The sequence is that of Bifunctional protein FolD from Pseudomonas entomophila (strain L48).